A 138-amino-acid chain; its full sequence is Superoxide dismutase [Mn] (138 aa).

Positions 1, 49, 133, and 137 each coordinate Mn(2+).

The protein belongs to the iron/manganese superoxide dismutase family. It depends on Mn(2+) as a cofactor.

It catalyses the reaction 2 superoxide + 2 H(+) = H2O2 + O2. Its function is as follows. Destroys superoxide anion radicals which are normally produced within the cells and which are toxic to biological systems. In Mycobacterium malmoense, this protein is Superoxide dismutase [Mn] (sodA).